The primary structure comprises 393 residues: MNDVFLKALPVLQKLTTAGFEAYFVGGSVRDYLLNRTISDVDIATSAFPEEVKEIFQSTYDTGIAHGTVTVRENNEFYEVTTFRTEGTYEDFRRPSEVKFIRSLEEDLQRRDFTMNAIAMDEHFALHDPFSGQEAIKNKAIKAVGKASERFHEDALRMMRGVRFLSQLDFQLDSETEKALESQIGLLQHTSVERITVEWLKMIKGPAIRRAMDLLLKVEMETYLPGLKGEKKALTEFGSWDWGKRTTDDAIWLGLVVTVQPNNVNAFLKAWKLPNKTIQLVSKAYQYALKMKETWLAEELYHAGKAVFSLVNELNIIRGKENNQHKLSQAYEALPIHSKKDLAITGADLLKWSGESAGPWVKETLDKLECGVLCNEINNEKNQIKRWLGYHEE.

ATP-binding residues include Gly27 and Arg30. Residues Gly27 and Arg30 each coordinate CTP. Mg(2+) is bound by residues Asp40 and Asp42. The ATP site is built by Arg111, Asp154, Arg157, Arg160, and Arg163. CTP-binding residues include Arg111, Asp154, Arg157, Arg160, and Arg163.

It belongs to the tRNA nucleotidyltransferase/poly(A) polymerase family. Bacterial CCA-adding enzyme type 3 subfamily. Homodimer. Requires Mg(2+) as cofactor.

It catalyses the reaction a tRNA precursor + 2 CTP + ATP = a tRNA with a 3' CCA end + 3 diphosphate. It carries out the reaction a tRNA with a 3' CCA end + 2 CTP + ATP = a tRNA with a 3' CCACCA end + 3 diphosphate. Its function is as follows. Catalyzes the addition and repair of the essential 3'-terminal CCA sequence in tRNAs without using a nucleic acid template. Adds these three nucleotides in the order of C, C, and A to the tRNA nucleotide-73, using CTP and ATP as substrates and producing inorganic pyrophosphate. tRNA 3'-terminal CCA addition is required both for tRNA processing and repair. Also involved in tRNA surveillance by mediating tandem CCA addition to generate a CCACCA at the 3' terminus of unstable tRNAs. While stable tRNAs receive only 3'-terminal CCA, unstable tRNAs are marked with CCACCA and rapidly degraded. The protein is CCA-adding enzyme of Listeria monocytogenes serovar 1/2a (strain ATCC BAA-679 / EGD-e).